Here is a 342-residue protein sequence, read N- to C-terminus: Ribosomal RNA small subunit methyltransferase C (342 aa).

This sequence belongs to the methyltransferase superfamily. RsmC family. In terms of assembly, monomer.

It localises to the cytoplasm. The catalysed reaction is guanosine(1207) in 16S rRNA + S-adenosyl-L-methionine = N(2)-methylguanosine(1207) in 16S rRNA + S-adenosyl-L-homocysteine + H(+). In terms of biological role, specifically methylates the guanine in position 1207 of 16S rRNA in the 30S particle. The polypeptide is Ribosomal RNA small subunit methyltransferase C (Salmonella newport (strain SL254)).